A 156-amino-acid chain; its full sequence is Endoribonuclease YbeY (156 aa).

Positions 117, 121, and 127 each coordinate Zn(2+).

This sequence belongs to the endoribonuclease YbeY family. It depends on Zn(2+) as a cofactor.

It is found in the cytoplasm. Its function is as follows. Single strand-specific metallo-endoribonuclease involved in late-stage 70S ribosome quality control and in maturation of the 3' terminus of the 16S rRNA. This Shewanella halifaxensis (strain HAW-EB4) protein is Endoribonuclease YbeY.